The following is a 405-amino-acid chain: Putative phosphate permease PYRAB14010 (405 aa).

11 consecutive transmembrane segments (helical) span residues 3–23 (MDPWLLLTLILGLAMAWAIGA), 44–64 (AVLIAGILEFTGAYFFGKTVT), 82–102 (VLVYGSLAALLGATIWLVIAT), 114–134 (IIGGIVGYGVVYAGLEIVNWG), 138–158 (SVVLSWILSPIVGAIFAFFIF), 181–201 (VWIGLAFVVIGTMFYIKVLHG), 207–227 (GVLKLGIPVGLVVFLITSMIL), 264–284 (VANAIGPVAAVYTIATMGMAG), 287–307 (VPVPRWILALGGLGIAIGVAT), 329–349 (FTIDFSAATVVLIASWLGMPI), and 384–404 (FVTVPVAGLISAIIFKILWIV).

The protein belongs to the inorganic phosphate transporter (PiT) (TC 2.A.20) family.

The protein localises to the cell membrane. Its function is as follows. Potential transporter for phosphate. The protein is Putative phosphate permease PYRAB14010 of Pyrococcus abyssi (strain GE5 / Orsay).